Reading from the N-terminus, the 135-residue chain is Gene 52 protein (135 aa).

2 disordered regions span residues 1–20 (MASG…PTPE) and 110–135 (LGGR…AEKQ). A compositionally biased stretch (basic residues) spans 122–135 (SKPRGRSKHRAEKQ).

The protein belongs to the herpesviridae BLRF2 family.

The sequence is that of Gene 52 protein (52) from Equine herpesvirus 2 (strain 86/87) (EHV-2).